A 189-amino-acid chain; its full sequence is Chitin synthase 1 (189 aa).

This sequence belongs to the chitin synthase family. Class I subfamily.

The protein localises to the cell membrane. It carries out the reaction [(1-&gt;4)-N-acetyl-beta-D-glucosaminyl](n) + UDP-N-acetyl-alpha-D-glucosamine = [(1-&gt;4)-N-acetyl-beta-D-glucosaminyl](n+1) + UDP + H(+). Functionally, polymerizes chitin, a structural polymer of the cell wall and septum, by transferring the sugar moiety of UDP-GlcNAc to the non-reducing end of the growing chitin polymer. In Botryotinia fuckeliana (Noble rot fungus), this protein is Chitin synthase 1 (chs1).